A 164-amino-acid polypeptide reads, in one-letter code: Cyclic pyranopterin monophosphate synthase (164 aa).

Substrate is bound by residues 77–79 (LCH) and 115–116 (ME). D130 is a catalytic residue.

This sequence belongs to the MoaC family. In terms of assembly, homohexamer; trimer of dimers.

It carries out the reaction (8S)-3',8-cyclo-7,8-dihydroguanosine 5'-triphosphate = cyclic pyranopterin phosphate + diphosphate. It participates in cofactor biosynthesis; molybdopterin biosynthesis. Catalyzes the conversion of (8S)-3',8-cyclo-7,8-dihydroguanosine 5'-triphosphate to cyclic pyranopterin monophosphate (cPMP). The chain is Cyclic pyranopterin monophosphate synthase from Sinorhizobium medicae (strain WSM419) (Ensifer medicae).